A 632-amino-acid polypeptide reads, in one-letter code: tRNA uridine 5-carboxymethylaminomethyl modification enzyme MnmG (632 aa).

Residues 13-18, Val-125, and Ser-180 each bind FAD; that span reads GGGHAG. 273–287 is an NAD(+) binding site; that stretch reads GPRYCPSIEDKVMRF. Residue Gln-370 coordinates FAD.

The protein belongs to the MnmG family. In terms of assembly, homodimer. Heterotetramer of two MnmE and two MnmG subunits. The cofactor is FAD.

It localises to the cytoplasm. Its function is as follows. NAD-binding protein involved in the addition of a carboxymethylaminomethyl (cmnm) group at the wobble position (U34) of certain tRNAs, forming tRNA-cmnm(5)s(2)U34. This Vibrio vulnificus (strain CMCP6) protein is tRNA uridine 5-carboxymethylaminomethyl modification enzyme MnmG.